The chain runs to 198 residues: Glycerol-3-phosphate acyltransferase (198 aa).

6 helical membrane passes run 1–21 (MNLL…GYLA), 53–73 (IIVF…AKYL), 79–99 (WQVA…WLNW), 111–131 (IFLG…IIMI), 136–156 (IVSL…FLSF), and 158–178 (GSNI…LVIW).

This sequence belongs to the PlsY family. As to quaternary structure, probably interacts with PlsX.

It localises to the cell inner membrane. It carries out the reaction an acyl phosphate + sn-glycerol 3-phosphate = a 1-acyl-sn-glycero-3-phosphate + phosphate. The protein operates within lipid metabolism; phospholipid metabolism. Catalyzes the transfer of an acyl group from acyl-phosphate (acyl-PO(4)) to glycerol-3-phosphate (G3P) to form lysophosphatidic acid (LPA). This enzyme utilizes acyl-phosphate as fatty acyl donor, but not acyl-CoA or acyl-ACP. This chain is Glycerol-3-phosphate acyltransferase, found in Prochlorococcus marinus (strain NATL1A).